The sequence spans 480 residues: Na(+)/H(+) antiporter NhaA (480 aa).

11 helical membrane-spanning segments follow: residues 34-54 (VGGV…NIPA), 76-96 (LSVA…VAGI), 113-133 (AVLP…VYTL), 144-164 (GWAV…AVIG), 174-194 (FLLT…AIFF), 197-217 (RINF…WLLL), 223-243 (GWYV…NSGV), 282-302 (GLAV…GGAL), 312-332 (LGVV…STWL), 350-370 (IFAV…IGEL), and 381-401 (EVKA…TVLL). Residues 454 to 480 (AAEKAAAARHGGAEVPGGAGEEDGRPA) form a disordered region.

Belongs to the NhaA Na(+)/H(+) (TC 2.A.33) antiporter family.

It is found in the cell membrane. It catalyses the reaction Na(+)(in) + 2 H(+)(out) = Na(+)(out) + 2 H(+)(in). Na(+)/H(+) antiporter that extrudes sodium in exchange for external protons. The sequence is that of Na(+)/H(+) antiporter NhaA from Streptomyces antibioticus.